Reading from the N-terminus, the 119-residue chain is Large ribosomal subunit protein bL20 (119 aa).

It belongs to the bacterial ribosomal protein bL20 family.

In terms of biological role, binds directly to 23S ribosomal RNA and is necessary for the in vitro assembly process of the 50S ribosomal subunit. It is not involved in the protein synthesizing functions of that subunit. In Streptococcus mutans serotype c (strain ATCC 700610 / UA159), this protein is Large ribosomal subunit protein bL20.